Reading from the N-terminus, the 590-residue chain is tRNA-guanine(15) transglycosylase (590 aa).

Residue D90 is the Nucleophile of the active site. Substrate is bound at residue D125. Residues C278, C280, and C283 each coordinate Zn(2+). The PUA domain occupies 502–577 (KGRVVVKGLF…HPFIIIRRHV (76 aa)).

The protein belongs to the archaeosine tRNA-ribosyltransferase family. Zn(2+) is required as a cofactor.

It catalyses the reaction guanosine(15) in tRNA + 7-cyano-7-deazaguanine = 7-cyano-7-carbaguanosine(15) in tRNA + guanine. It functions in the pathway tRNA modification; archaeosine-tRNA biosynthesis. Exchanges the guanine residue with 7-cyano-7-deazaguanine (preQ0) at position 15 in the dihydrouridine loop (D-loop) of archaeal tRNAs. The sequence is that of tRNA-guanine(15) transglycosylase from Korarchaeum cryptofilum (strain OPF8).